Here is a 300-residue protein sequence, read N- to C-terminus: Energy-coupling factor transporter ATP-binding protein EcfA2 (300 aa).

Positions 3–258 (IKAKNIVKIY…NKFLIENKML (256 aa)) constitute an ABC transporter domain. 40 to 47 (GQTGSGKT) serves as a coordination point for ATP.

Belongs to the ABC transporter superfamily. Energy-coupling factor EcfA family. As to quaternary structure, forms a stable energy-coupling factor (ECF) transporter complex composed of 2 membrane-embedded substrate-binding proteins (S component), 2 ATP-binding proteins (A component) and 2 transmembrane proteins (T component).

Its subcellular location is the cell membrane. ATP-binding (A) component of a common energy-coupling factor (ECF) ABC-transporter complex. Unlike classic ABC transporters this ECF transporter provides the energy necessary to transport a number of different substrates. This chain is Energy-coupling factor transporter ATP-binding protein EcfA2, found in Mesomycoplasma hyopneumoniae (strain 7448) (Mycoplasma hyopneumoniae).